We begin with the raw amino-acid sequence, 204 residues long: Methylthioribulose-1-phosphate dehydratase (204 aa).

Residues His-94 and His-96 each coordinate Zn(2+).

It belongs to the aldolase class II family. MtnB subfamily. It depends on Zn(2+) as a cofactor.

The enzyme catalyses 5-(methylsulfanyl)-D-ribulose 1-phosphate = 5-methylsulfanyl-2,3-dioxopentyl phosphate + H2O. The protein operates within amino-acid biosynthesis; L-methionine biosynthesis via salvage pathway; L-methionine from S-methyl-5-thio-alpha-D-ribose 1-phosphate: step 2/6. Functionally, catalyzes the dehydration of methylthioribulose-1-phosphate (MTRu-1-P) into 2,3-diketo-5-methylthiopentyl-1-phosphate (DK-MTP-1-P). The sequence is that of Methylthioribulose-1-phosphate dehydratase from Cronobacter sakazakii (strain ATCC BAA-894) (Enterobacter sakazakii).